The chain runs to 240 residues: Ion-translocating oxidoreductase complex subunit E (240 aa).

The next 5 helical transmembrane spans lie at 41-61, 71-91, 95-115, 130-150, and 184-204; these read LGLG…VSLV, LPAF…LMQA, ELYQ…VILG, SFDG…LGGL, and GFLL…LIAL.

It belongs to the NqrDE/RnfAE family. In terms of assembly, the complex is composed of six subunits: RnfA, RnfB, RnfC, RnfD, RnfE and RnfG.

The protein resides in the cell inner membrane. Functionally, part of a membrane-bound complex that couples electron transfer with translocation of ions across the membrane. The sequence is that of Ion-translocating oxidoreductase complex subunit E from Pseudomonas aeruginosa (strain ATCC 15692 / DSM 22644 / CIP 104116 / JCM 14847 / LMG 12228 / 1C / PRS 101 / PAO1).